The chain runs to 631 residues: tRNA uridine 5-carboxymethylaminomethyl modification enzyme MnmG (631 aa).

FAD-binding positions include 15-20, Val-127, and Ser-182; that span reads GGGHAG. 275-289 provides a ligand contact to NAD(+); it reads GPRYCPSIEDKIVRF. Gln-372 is a binding site for FAD.

It belongs to the MnmG family. Homodimer. Heterotetramer of two MnmE and two MnmG subunits. FAD is required as a cofactor.

It is found in the cytoplasm. Its function is as follows. NAD-binding protein involved in the addition of a carboxymethylaminomethyl (cmnm) group at the wobble position (U34) of certain tRNAs, forming tRNA-cmnm(5)s(2)U34. The polypeptide is tRNA uridine 5-carboxymethylaminomethyl modification enzyme MnmG (Buchnera aphidicola subsp. Schizaphis graminum (strain Sg)).